The chain runs to 274 residues: 2,3,4,5-tetrahydropyridine-2,6-dicarboxylate N-succinyltransferase (274 aa).

Residues R104 and D141 each coordinate substrate.

The protein belongs to the transferase hexapeptide repeat family. As to quaternary structure, homotrimer.

The protein resides in the cytoplasm. It carries out the reaction (S)-2,3,4,5-tetrahydrodipicolinate + succinyl-CoA + H2O = (S)-2-succinylamino-6-oxoheptanedioate + CoA. It functions in the pathway amino-acid biosynthesis; L-lysine biosynthesis via DAP pathway; LL-2,6-diaminopimelate from (S)-tetrahydrodipicolinate (succinylase route): step 1/3. This is 2,3,4,5-tetrahydropyridine-2,6-dicarboxylate N-succinyltransferase from Buchnera aphidicola subsp. Acyrthosiphon pisum (strain APS) (Acyrthosiphon pisum symbiotic bacterium).